The following is a 314-amino-acid chain: Nucleotide-binding protein CE1710 (314 aa).

The segment at 1 to 29 is disordered; sequence MNQTPGSTVPETATPVTSPASSPSAPETT. Over residues 7 to 29 the composition is skewed to low complexity; that stretch reads STVPETATPVTSPASSPSAPETT. 37–44 serves as a coordination point for ATP; that stretch reads GMSGAGLS. 88–91 is a GTP binding site; sequence DVRS.

It belongs to the RapZ-like family.

Functionally, displays ATPase and GTPase activities. This is Nucleotide-binding protein CE1710 from Corynebacterium efficiens (strain DSM 44549 / YS-314 / AJ 12310 / JCM 11189 / NBRC 100395).